The sequence spans 346 residues: Large ribosomal subunit protein uL10 (346 aa).

Positions 305 to 346 (EVPAAPAPEAKEEKKEEAEEEEEEKKEVSEEDLSAGLGALFG) are disordered. Acidic residues predominate over residues 322–337 (AEEEEEEKKEVSEEDL).

The protein belongs to the universal ribosomal protein uL10 family. In terms of assembly, part of the 50S ribosomal subunit. Forms part of the ribosomal stalk which helps the ribosome interact with GTP-bound translation factors. Forms a heptameric L10(L12)2(L12)2(L12)2 complex, where L10 forms an elongated spine to which the L12 dimers bind in a sequential fashion.

Forms part of the ribosomal stalk, playing a central role in the interaction of the ribosome with GTP-bound translation factors. The chain is Large ribosomal subunit protein uL10 from Ignicoccus hospitalis (strain KIN4/I / DSM 18386 / JCM 14125).